Here is a 700-residue protein sequence, read N- to C-terminus: Tectonic-2 (700 aa).

The signal sequence occupies residues 1–25 (MGSLSPLSLLWGLLLLQGVLRPLRG). The Extracellular segment spans residues 26-665 (DPVFIPPFIR…YYQGEPQSQC (640 aa)). Asn76, Asn82, Asn146, Asn156, and Asn389 each carry an N-linked (GlcNAc...) asparagine glycan. A helical transmembrane segment spans residues 666–682 (VAKGLMLLSLLMLAILL). At 683 to 700 (RHPWVRMCKARDSAAIYH) the chain is on the cytoplasmic side.

It belongs to the tectonic family. Part of the tectonic-like complex (also named B9 complex). In terms of tissue distribution, significant expression is observed in brain, kidney and eye.

The protein localises to the membrane. The protein resides in the cytoplasm. It localises to the cytoskeleton. Its subcellular location is the cilium basal body. Functionally, component of the tectonic-like complex, a complex localized at the transition zone of primary cilia and acting as a barrier that prevents diffusion of transmembrane proteins between the cilia and plasma membranes. Required for hedgehog signaling transduction. The protein is Tectonic-2 (Tctn2) of Mus musculus (Mouse).